The chain runs to 572 residues: Protein IQ-DOMAIN 30 (572 aa).

The interval 75–96 is disordered; it reads SDDEIQVSEVQPTDSQDVASVP. The span at 82 to 92 shows a compositional bias: polar residues; sequence SEVQPTDSQDV. IQ domains are found at residues 108–136 and 137–154; these read QEIA…GIIR and LQAL…VSTL. A calmodulin-binding region spans residues 159-178; that stretch reads GIVRLQALARGREIRHSDIG. Disordered regions lie at residues 282–332 and 399–572; these read RPKK…MDNP and IQTH…EWKR. Composition is skewed to polar residues over residues 291-305 and 400-419; these read PSSN…QTSS and QTHT…VNQI. The segment covering 428–455 has biased composition (basic and acidic residues); that stretch reads AEEKEDVKEERTPKQNHKENSAGKENQK. Polar residues-rich tracts occupy residues 459-493, 502-514, and 522-560; these read KASS…QATK, QGSS…GTTE, and LPSS…SSRE.

The protein belongs to the IQD family. In terms of assembly, binds to multiple calmodulin (CaM) in the presence of Ca(2+) and CaM-like proteins.

It is found in the nucleus envelope. The protein resides in the cytoplasm. The protein localises to the cytoskeleton. May be involved in cooperative interactions with calmodulins or calmodulin-like proteins. Recruits calmodulin proteins to microtubules, thus being a potential scaffold in cellular signaling and trafficking. May associate with nucleic acids and regulate gene expression at the transcriptional or post-transcriptional level. The polypeptide is Protein IQ-DOMAIN 30 (Arabidopsis thaliana (Mouse-ear cress)).